Here is a 164-residue protein sequence, read N- to C-terminus: S-ribosylhomocysteine lyase (164 aa).

Residues histidine 54, histidine 58, and cysteine 128 each coordinate Fe cation.

The protein belongs to the LuxS family. In terms of assembly, homodimer. Fe cation is required as a cofactor.

It catalyses the reaction S-(5-deoxy-D-ribos-5-yl)-L-homocysteine = (S)-4,5-dihydroxypentane-2,3-dione + L-homocysteine. Its function is as follows. Involved in the synthesis of autoinducer 2 (AI-2) which is secreted by bacteria and is used to communicate both the cell density and the metabolic potential of the environment. The regulation of gene expression in response to changes in cell density is called quorum sensing. Catalyzes the transformation of S-ribosylhomocysteine (RHC) to homocysteine (HC) and 4,5-dihydroxy-2,3-pentadione (DPD). This Campylobacter jejuni subsp. doylei (strain ATCC BAA-1458 / RM4099 / 269.97) protein is S-ribosylhomocysteine lyase.